A 345-amino-acid chain; its full sequence is Phosphoribosylformylglycinamidine cyclo-ligase (345 aa).

Belongs to the AIR synthase family.

The protein localises to the cytoplasm. It catalyses the reaction 2-formamido-N(1)-(5-O-phospho-beta-D-ribosyl)acetamidine + ATP = 5-amino-1-(5-phospho-beta-D-ribosyl)imidazole + ADP + phosphate + H(+). It functions in the pathway purine metabolism; IMP biosynthesis via de novo pathway; 5-amino-1-(5-phospho-D-ribosyl)imidazole from N(2)-formyl-N(1)-(5-phospho-D-ribosyl)glycinamide: step 2/2. The sequence is that of Phosphoribosylformylglycinamidine cyclo-ligase from Shewanella baltica (strain OS223).